Here is a 452-residue protein sequence, read N- to C-terminus: Cytochrome b-c1 complex subunit 2, mitochondrial (452 aa).

The transit peptide at Met-1–Tyr-14 directs the protein to the mitochondrion. N6-acetyllysine occurs at positions 65, 198, and 249. Ser-367 bears the Phosphoserine mark.

This sequence belongs to the peptidase M16 family. UQCRC2/QCR2 subfamily. In terms of assembly, component of the ubiquinol-cytochrome c oxidoreductase (cytochrome b-c1 complex, complex III, CIII), a multisubunit enzyme composed of 11 subunits. The complex is composed of 3 respiratory subunits cytochrome b, cytochrome c1 and Rieske protein UQCRFS1, 2 core protein subunits UQCRC1/QCR1 and UQCRC2/QCR2, and 6 low-molecular weight protein subunits UQCRH/QCR6, UQCRB/QCR7, UQCRQ/QCR8, UQCR10/QCR9, UQCR11/QCR10 and subunit 9, the cleavage product of Rieske protein UQCRFS1. The complex exists as an obligatory dimer and forms supercomplexes (SCs) in the inner mitochondrial membrane with NADH-ubiquinone oxidoreductase (complex I, CI) and cytochrome c oxidase (complex IV, CIV), resulting in different assemblies (supercomplex SCI(1)III(2)IV(1) and megacomplex MCI(2)III(2)IV(2)). Interacts with RAB5IF. Interacts with STMP1. Expressed in the head region and flagellum of epididymal sperm.

The protein resides in the mitochondrion inner membrane. Its function is as follows. Component of the ubiquinol-cytochrome c oxidoreductase, a multisubunit transmembrane complex that is part of the mitochondrial electron transport chain which drives oxidative phosphorylation. The respiratory chain contains 3 multisubunit complexes succinate dehydrogenase (complex II, CII), ubiquinol-cytochrome c oxidoreductase (cytochrome b-c1 complex, complex III, CIII) and cytochrome c oxidase (complex IV, CIV), that cooperate to transfer electrons derived from NADH and succinate to molecular oxygen, creating an electrochemical gradient over the inner membrane that drives transmembrane transport and the ATP synthase. The cytochrome b-c1 complex catalyzes electron transfer from ubiquinol to cytochrome c, linking this redox reaction to translocation of protons across the mitochondrial inner membrane, with protons being carried across the membrane as hydrogens on the quinol. In the process called Q cycle, 2 protons are consumed from the matrix, 4 protons are released into the intermembrane space and 2 electrons are passed to cytochrome c. The 2 core subunits UQCRC1/QCR1 and UQCRC2/QCR2 are homologous to the 2 mitochondrial-processing peptidase (MPP) subunits beta-MPP and alpha-MPP respectively, and they seem to have preserved their MPP processing properties. May be involved in the in situ processing of UQCRFS1 into the mature Rieske protein and its mitochondrial targeting sequence (MTS)/subunit 9 when incorporated into complex III. The sequence is that of Cytochrome b-c1 complex subunit 2, mitochondrial (Uqcrc2) from Rattus norvegicus (Rat).